A 542-amino-acid chain; its full sequence is Putative cysteine ligase BshC (542 aa).

A coiled-coil region spans residues leucine 458–alanine 479.

It belongs to the BshC family.

Involved in bacillithiol (BSH) biosynthesis. May catalyze the last step of the pathway, the addition of cysteine to glucosamine malate (GlcN-Mal) to generate BSH. This Geobacillus sp. (strain WCH70) protein is Putative cysteine ligase BshC.